A 130-amino-acid polypeptide reads, in one-letter code: Small ribosomal subunit protein uS11c (130 aa).

It belongs to the universal ribosomal protein uS11 family. As to quaternary structure, part of the 30S ribosomal subunit.

Its subcellular location is the plastid. The protein localises to the chloroplast. This Pinus koraiensis (Korean pine) protein is Small ribosomal subunit protein uS11c.